The primary structure comprises 892 residues: Alanine--tRNA ligase (892 aa).

H565, H569, C678, and H682 together coordinate Zn(2+). Residues 857–876 (GGKGGGGRPDMAQAGGPDGA) form a disordered region.

This sequence belongs to the class-II aminoacyl-tRNA synthetase family. Requires Zn(2+) as cofactor.

Its subcellular location is the cytoplasm. It carries out the reaction tRNA(Ala) + L-alanine + ATP = L-alanyl-tRNA(Ala) + AMP + diphosphate. Functionally, catalyzes the attachment of alanine to tRNA(Ala) in a two-step reaction: alanine is first activated by ATP to form Ala-AMP and then transferred to the acceptor end of tRNA(Ala). Also edits incorrectly charged Ser-tRNA(Ala) and Gly-tRNA(Ala) via its editing domain. The polypeptide is Alanine--tRNA ligase (Bradyrhizobium diazoefficiens (strain JCM 10833 / BCRC 13528 / IAM 13628 / NBRC 14792 / USDA 110)).